We begin with the raw amino-acid sequence, 398 residues long: Argininosuccinate lyase (398 aa).

The protein belongs to the lyase 1 family. Argininosuccinate lyase subfamily.

The protein localises to the cytoplasm. It catalyses the reaction 2-(N(omega)-L-arginino)succinate = fumarate + L-arginine. Its pathway is amino-acid biosynthesis; L-arginine biosynthesis; L-arginine from L-ornithine and carbamoyl phosphate: step 3/3. The protein is Argininosuccinate lyase of Thermotoga neapolitana (strain ATCC 49049 / DSM 4359 / NBRC 107923 / NS-E).